The sequence spans 211 residues: C-type lectin domain family 2 member L (211 aa).

The interval 1–53 (MEPAREPPARARPPPPAARPAPAAPRPRSPAEAEARGPEGLLRRSGSGYEGST) is disordered. The span at 10 to 28 (RARPPPPAARPAPAAPRPR) shows a compositional bias: pro residues. Position 29 is a phosphoserine (Ser29). The helical transmembrane segment at 66–86 (LLLGAIAVLLFAILVVMSILA) threads the bilayer. One can recognise a C-type lectin domain in the interval 104 to 206 (YGRKCYYFSE…CLTTRPWVCS (103 aa)). Cystine bridges form between Cys125–Cys205 and Cys184–Cys197.

The protein localises to the membrane. This Mus musculus (Mouse) protein is C-type lectin domain family 2 member L (Clec2l).